A 142-amino-acid polypeptide reads, in one-letter code: Hemoglobin subunit alpha (142 aa).

In terms of domain architecture, Globin spans 2 to 142; that stretch reads VLSDANKQEI…LVHQLSSKYR (141 aa). Residue histidine 60 coordinates O2. A heme b-binding site is contributed by histidine 89.

It belongs to the globin family. As to quaternary structure, heterotetramer of two alpha chains and two beta chains. Red blood cells.

In terms of biological role, involved in oxygen transport from gills to the various peripheral tissues. This chain is Hemoglobin subunit alpha (HBA), found in Bathyraja eatonii (Eaton's skate).